The primary structure comprises 656 residues: Hemocyanin subunit A (656 aa).

A signal peptide spans 1-18 (MWSLALATLFVLGTVIRA). Residues H197, H201, and H227 each coordinate Cu cation. An N-linked (GlcNAc...) asparagine glycan is attached at N313. Residues H348, H352, and H388 each coordinate Cu cation. An intrachain disulfide couples C558 to C606.

Belongs to the tyrosinase family. Hemocyanin subfamily. In terms of assembly, 36-chain polymer consisting of 6 hexamers, each of which includes 4 different chains, A, B, C and D. In terms of tissue distribution, hemolymph.

The protein localises to the secreted. Its subcellular location is the extracellular space. Its function is as follows. Hemocyanins are copper-containing oxygen carriers occurring freely dissolved in the hemolymph of many mollusks and arthropods. The protein is Hemocyanin subunit A (HCA) of Scutigera coleoptrata (House centipede).